A 347-amino-acid chain; its full sequence is Probable cytosolic iron-sulfur protein assembly protein 1 (347 aa).

WD repeat units lie at residues Leu11–Val48, Ser62–Asp101, Gly122–Glu161, Glu168–Ala207, Gly212–Glu255, Val266–Val304, and Ser311–Asn347.

The protein belongs to the WD repeat CIA1 family. Interacts with NAR1.

It is found in the cytoplasm. It localises to the nucleus. In terms of biological role, essential component of the cytosolic iron-sulfur (Fe/S) protein assembly machinery. Required for the maturation of extramitochondrial Fe/S proteins. The protein is Probable cytosolic iron-sulfur protein assembly protein 1 of Vanderwaltozyma polyspora (strain ATCC 22028 / DSM 70294 / BCRC 21397 / CBS 2163 / NBRC 10782 / NRRL Y-8283 / UCD 57-17) (Kluyveromyces polysporus).